The chain runs to 336 residues: Ferredoxin--NADP reductase (336 aa).

FAD-binding residues include T18, E37, Q45, Y50, V92, F127, D290, and S331.

Belongs to the ferredoxin--NADP reductase type 2 family. As to quaternary structure, homodimer. The cofactor is FAD.

The enzyme catalyses 2 reduced [2Fe-2S]-[ferredoxin] + NADP(+) + H(+) = 2 oxidized [2Fe-2S]-[ferredoxin] + NADPH. This Symbiobacterium thermophilum (strain DSM 24528 / JCM 14929 / IAM 14863 / T) protein is Ferredoxin--NADP reductase.